Reading from the N-terminus, the 51-residue chain is Large ribosomal subunit protein eL40 (51 aa).

The protein belongs to the eukaryotic ribosomal protein eL40 family.

The sequence is that of Large ribosomal subunit protein eL40 from Thermococcus gammatolerans (strain DSM 15229 / JCM 11827 / EJ3).